The sequence spans 122 residues: Secreted RxLR effector protein RXLR-C251 (122 aa).

The signal sequence occupies residues 1–24; sequence MRFFYKLALMTTVASLACSDTALA. The RxLR signature appears at 48–51; the sequence is RSLR.

This sequence belongs to the RxLR effector family.

Its subcellular location is the secreted. It localises to the host cytoplasm. It is found in the host nucleus. Secreted effector that does not suppress pattern-triggered immunity (PTI) in plant host. The polypeptide is Secreted RxLR effector protein RXLR-C251 (Plasmopara halstedii (Downy mildew of sunflower)).